A 129-amino-acid chain; its full sequence is Small ribosomal subunit protein uS11 (129 aa).

Belongs to the universal ribosomal protein uS11 family. Part of the 30S ribosomal subunit. Interacts with proteins S7 and S18. Binds to IF-3.

Functionally, located on the platform of the 30S subunit, it bridges several disparate RNA helices of the 16S rRNA. Forms part of the Shine-Dalgarno cleft in the 70S ribosome. This chain is Small ribosomal subunit protein uS11, found in Roseobacter denitrificans (strain ATCC 33942 / OCh 114) (Erythrobacter sp. (strain OCh 114)).